A 348-amino-acid polypeptide reads, in one-letter code: Phosphoribosylformylglycinamidine cyclo-ligase (348 aa).

The protein belongs to the AIR synthase family.

It is found in the cytoplasm. The catalysed reaction is 2-formamido-N(1)-(5-O-phospho-beta-D-ribosyl)acetamidine + ATP = 5-amino-1-(5-phospho-beta-D-ribosyl)imidazole + ADP + phosphate + H(+). It functions in the pathway purine metabolism; IMP biosynthesis via de novo pathway; 5-amino-1-(5-phospho-D-ribosyl)imidazole from N(2)-formyl-N(1)-(5-phospho-D-ribosyl)glycinamide: step 2/2. The sequence is that of Phosphoribosylformylglycinamidine cyclo-ligase from Ruegeria sp. (strain TM1040) (Silicibacter sp.).